Here is a 195-residue protein sequence, read N- to C-terminus: Dephospho-CoA kinase (195 aa).

One can recognise a DPCK domain in the interval 4–195 (IIGLTGGIAS…EQILDALQRL (192 aa)). Residue 12–17 (ASGKST) coordinates ATP.

This sequence belongs to the CoaE family.

It localises to the cytoplasm. The enzyme catalyses 3'-dephospho-CoA + ATP = ADP + CoA + H(+). It functions in the pathway cofactor biosynthesis; coenzyme A biosynthesis; CoA from (R)-pantothenate: step 5/5. In terms of biological role, catalyzes the phosphorylation of the 3'-hydroxyl group of dephosphocoenzyme A to form coenzyme A. This chain is Dephospho-CoA kinase, found in Streptococcus agalactiae serotype Ia (strain ATCC 27591 / A909 / CDC SS700).